The primary structure comprises 96 residues: MTQSIDSMSISIYENLISTMIQDIVSREVVHQKQMQSRYPQLKQYSIDPNGNIDINGNTKQQDSSQYFHCKNCGRDVSANRFAAHLQRCLNSRQRR.

The segment at 68–89 adopts an SGF11-type zinc-finger fold; it reads FHCKNCGRDVSANRFAAHLQRC.

The protein belongs to the SGF11 family. In terms of assembly, component of the 1.8 MDa SAGA transcription coactivator-HAT complex. SAGA is built of 5 distinct domains with specialized functions. Within the SAGA complex, SUS1, SGF11, SGF73 and UBP8 form an additional subcomplex of SAGA called the DUB module (deubiquitination module). Interacts directly with SGF73, SUS1 and UBP8.

It localises to the nucleus. Functionally, functions as a component of the transcription regulatory histone acetylation (HAT) complex SAGA. At the promoters, SAGA is required for recruitment of the basal transcription machinery. It influences RNA polymerase II transcriptional activity through different activities such as TBP interaction and promoter selectivity, interaction with transcription activators, and chromatin modification through histone acetylation and deubiquitination. SAGA acetylates nucleosomal histone H3 to some extent (to form H3K9ac, H3K14ac, H3K18ac and H3K23ac). SAGA interacts with DNA via upstream activating sequences (UASs). Involved in transcriptional regulation of a subset of SAGA-regulated genes. Within the SAGA complex, participates in a subcomplex, that specifically deubiquitinates histones H2B. The polypeptide is SAGA-associated factor 11 (Vanderwaltozyma polyspora (strain ATCC 22028 / DSM 70294 / BCRC 21397 / CBS 2163 / NBRC 10782 / NRRL Y-8283 / UCD 57-17) (Kluyveromyces polysporus)).